The following is a 383-amino-acid chain: tRNA-specific 2-thiouridylase MnmA (383 aa).

ATP contacts are provided by residues 6 to 13 and Leu32; that span reads AMSGGVDS. Cys101 functions as the Nucleophile in the catalytic mechanism. Cysteines 101 and 199 form a disulfide. Gly125 provides a ligand contact to ATP. Residues 148-150 form an interaction with tRNA region; sequence KDQ. The active-site Cysteine persulfide intermediate is the Cys199.

The protein belongs to the MnmA/TRMU family.

The protein resides in the cytoplasm. The catalysed reaction is S-sulfanyl-L-cysteinyl-[protein] + uridine(34) in tRNA + AH2 + ATP = 2-thiouridine(34) in tRNA + L-cysteinyl-[protein] + A + AMP + diphosphate + H(+). Functionally, catalyzes the 2-thiolation of uridine at the wobble position (U34) of tRNA, leading to the formation of s(2)U34. This chain is tRNA-specific 2-thiouridylase MnmA, found in Kocuria rhizophila (strain ATCC 9341 / DSM 348 / NBRC 103217 / DC2201).